Consider the following 376-residue polypeptide: Ribonucleoside-diphosphate reductase subunit beta (376 aa).

D85, E116, and H119 together coordinate Fe cation. Y123 is an active-site residue. Fe cation is bound by residues E205, E239, and H242.

It belongs to the ribonucleoside diphosphate reductase small chain family. Tetramer of two alpha and two beta subunits. Fe cation serves as cofactor.

The catalysed reaction is a 2'-deoxyribonucleoside 5'-diphosphate + [thioredoxin]-disulfide + H2O = a ribonucleoside 5'-diphosphate + [thioredoxin]-dithiol. Provides the precursors necessary for DNA synthesis. Catalyzes the biosynthesis of deoxyribonucleotides from the corresponding ribonucleotides. This is Ribonucleoside-diphosphate reductase subunit beta (nrdB) from Buchnera aphidicola subsp. Baizongia pistaciae (strain Bp).